The sequence spans 63 residues: MSKVCEICGKRPTTGNTVSHSNKKNKRWWKPNVQKVKVIVDGEVKKMRVCTKCLKAGKVQRAV.

Belongs to the bacterial ribosomal protein bL28 family.

This chain is Large ribosomal subunit protein bL28, found in Kosmotoga olearia (strain ATCC BAA-1733 / DSM 21960 / TBF 19.5.1).